Consider the following 172-residue polypeptide: ATP synthase subunit b (172 aa).

Residues 12 to 32 form a helical membrane-spanning segment; the sequence is SLYIGDLVFYIVTFIILMLLV. 2 stretches are compositionally biased toward basic and acidic residues: residues 63-74 and 116-131; these read ESAEKMAAKRQA and AQKD…LNSA. The disordered stretch occupies residues 63–131; sequence ESAEKMAAKR…QARRDALNSA (69 aa).

It belongs to the ATPase B chain family. As to quaternary structure, F-type ATPases have 2 components, F(1) - the catalytic core - and F(0) - the membrane proton channel. F(1) has five subunits: alpha(3), beta(3), gamma(1), delta(1), epsilon(1). F(0) has three main subunits: a(1), b(2) and c(10-14). The alpha and beta chains form an alternating ring which encloses part of the gamma chain. F(1) is attached to F(0) by a central stalk formed by the gamma and epsilon chains, while a peripheral stalk is formed by the delta and b chains.

It localises to the cell membrane. Functionally, f(1)F(0) ATP synthase produces ATP from ADP in the presence of a proton or sodium gradient. F-type ATPases consist of two structural domains, F(1) containing the extramembraneous catalytic core and F(0) containing the membrane proton channel, linked together by a central stalk and a peripheral stalk. During catalysis, ATP synthesis in the catalytic domain of F(1) is coupled via a rotary mechanism of the central stalk subunits to proton translocation. Component of the F(0) channel, it forms part of the peripheral stalk, linking F(1) to F(0). The sequence is that of ATP synthase subunit b from Limosilactobacillus reuteri (strain DSM 20016) (Lactobacillus reuteri).